The following is a 383-amino-acid chain: Ribosomal RNA large subunit methyltransferase G (383 aa).

Belongs to the methyltransferase superfamily. RlmG family.

Its subcellular location is the cytoplasm. The enzyme catalyses guanosine(1835) in 23S rRNA + S-adenosyl-L-methionine = N(2)-methylguanosine(1835) in 23S rRNA + S-adenosyl-L-homocysteine + H(+). Functionally, specifically methylates the guanine in position 1835 (m2G1835) of 23S rRNA. In Shewanella amazonensis (strain ATCC BAA-1098 / SB2B), this protein is Ribosomal RNA large subunit methyltransferase G.